A 295-amino-acid polypeptide reads, in one-letter code: Protoheme IX farnesyltransferase (295 aa).

9 consecutive transmembrane segments (helical) span residues 9–29, 36–56, 80–100, 108–128, 135–155, 163–183, 209–229, 230–250, and 265–285; these read ITKPGIIFGNVLSVAGGFFLA, FGVFLAAVIGTSLVVASGCVF, LVSLKLALLYATLLGIAGVAL, LAALFAVIGFVIYVGFYSLYL, GTLVGSLSGAMPPVIGYCAVS, LTLLVMFSLWQMPHSYAIAIF, ILLYILAFLVATLMLTVGGYA, GLNYLAVAAGMGMYWLYMAWK, and FVFSIFTITALSVMMSVDFQV.

The protein belongs to the UbiA prenyltransferase family. Protoheme IX farnesyltransferase subfamily.

The protein resides in the cell inner membrane. It catalyses the reaction heme b + (2E,6E)-farnesyl diphosphate + H2O = Fe(II)-heme o + diphosphate. Its pathway is porphyrin-containing compound metabolism; heme O biosynthesis; heme O from protoheme: step 1/1. In terms of biological role, converts heme B (protoheme IX) to heme O by substitution of the vinyl group on carbon 2 of heme B porphyrin ring with a hydroxyethyl farnesyl side group. The protein is Protoheme IX farnesyltransferase of Pseudomonas syringae pv. tomato (strain ATCC BAA-871 / DC3000).